Consider the following 146-residue polypeptide: Leghemoglobin-3 (146 aa).

In terms of domain architecture, Globin spans 2–146; sequence GFTDKQEALV…LATAIKKAMV (145 aa). Position 29 is a nitrated tyrosine (Y29). Residue S44 participates in heme b binding. Position 44 is a phosphoserine (S44). Position 61 (H61) interacts with O2. Residues K64, H93, and K96 each coordinate heme b. Y134 is subject to Nitrated tyrosine.

It belongs to the plant globin family. Monomer. Nitrated in effective nodules and particularly in hypoxic conditions; this mechanism may play a protective role in the symbiosis by buffering toxic peroxynitrite NO(2)(-). Nitration level decrease during nodule senescence. Post-translationally, phosphorylation at Ser-44 disrupts the molecular environment of its porphyrin ring oxygen binding pocket, thus leading to a reduced oxygen consumption and to the delivery of oxygen O(2) to symbiosomes. As to expression, root nodules.

The protein resides in the cytoplasm. Its subcellular location is the cytosol. It localises to the nucleus. Leghemoglobin that reversibly binds oxygen O(2) through a pentacoordinated heme iron. In root nodules, facilitates the diffusion of oxygen to the bacteroids while preventing the bacterial nitrogenase from being inactivated by buffering dioxygen, nitric oxide and carbon monoxide, and promoting the formation of reactive oxygen species (ROS, e.g. H(2)O(2)). This role is essential for symbiotic nitrogen fixation (SNF). In Medicago sativa (Alfalfa), this protein is Leghemoglobin-3.